The following is a 338-amino-acid chain: Cap-specific mRNA (nucleoside-2'-O-)-methyltransferase (338 aa).

Residue tyrosine 22 coordinates mRNA. The S-adenosyl-L-methionine site is built by glutamine 39, tyrosine 66, glycine 68, glycine 72, aspartate 95, arginine 97, valine 116, and aspartate 138. The interval 169–249 (PAASSLKWRC…NKIIRNRIII (81 aa)) is binding to NPH-I. The interval 169-333 (PAASSLKWRC…NTKKSVRGNK (165 aa)) is binding to Rap94. Catalysis depends on lysine 175, which acts as the For methyltransferase activity. MRNA contacts are provided by residues 177–180 (RCPF), aspartate 182, 205–207 (SAE), and glutamate 233. The segment at 305–338 (HHEPTQRKVPSKNTMLKSRNTKKSVRGNKQGRRT) is disordered. Basic residues predominate over residues 323–338 (RNTKKSVRGNKQGRRT).

Belongs to the class I-like SAM-binding methyltransferase superfamily. Poxvirus/kinetoplastid 2'-O-MTase family. As to quaternary structure, interacts with poly(A) polymerase catalytic subunit OPG063. Interacts with OPG109 and OPG123; these interactions might help linking transcription to capping and polyadenylation.

The protein localises to the virion. The enzyme catalyses a 5'-end (N(7)-methyl 5'-triphosphoguanosine)-ribonucleoside in mRNA + S-adenosyl-L-methionine = a 5'-end (N(7)-methyl 5'-triphosphoguanosine)-(2'-O-methyl-ribonucleoside) in mRNA + S-adenosyl-L-homocysteine + H(+). Functionally, displays methyltransferase, positive regulation of the poly(A) polymerase and transcription elongation activities. Involved in the modification of both mRNA ends and in intermediate and late gene positive transcription elongation. At the mRNAs 5' end, methylates the ribose 2' OH group of the first transcribed nucleotide, thereby producing a 2'-O-methylpurine cap. At the 3' end, functions as a processivity factor which stimulates the activity of the viral poly(A) polymerase OPG063 that creates mRNA's poly(A) tail. In the presence of OPG102, OPG063 does not dissociate from the RNA allowing tail elongation to around 250 adenylates. This chain is Cap-specific mRNA (nucleoside-2'-O-)-methyltransferase (OPG102), found in Oryctolagus cuniculus (Rabbit).